A 77-amino-acid polypeptide reads, in one-letter code: Lantipeptide prochlorosin 4.3 (77 aa).

The propeptide occupies 1–64 (MSEEQLKAFI…DDELEGVAGG (64 aa)). T65 carries the post-translational modification 2,3-didehydrobutyrine. Positions 67-70 (SGGC) form a cross-link, lanthionine (Ser-Cys). Residues 72 to 76 (TSMFC) constitute a cross-link (beta-methyllanthionine (Thr-Cys)).

Post-translationally, cross-links are proved in vitro, when coepressed in E.coli with the ProcM lanthionine synthetase. In terms of processing, the lanthionine residue has both a DL configuration (with 2S,6R stereochemistry) and a LL configuration (with 2R,6R stereochemistry). DL and LL diastomers have a 4:1 ratio. It is unknown whether nonenzymatic cyclization occur, but authors favor a model in which ProcM does generate all thioether cross-links. The beta-methyllanthionine residue has a DL configuration (with 2S,3S,6R stereochemistry). Maturation of prochlorosin involves the enzymatic conversion of Thr, and Ser into dehydrated AA and the formation of thioether bonds with cysteines. This is followed by membrane translocation and cleavage of the modified precursor.

The protein resides in the secreted. Its function is as follows. Lanthionine-containing peptide (lantipeptide) with unknown function. Does not show antibiotic activity against Lactococcus lactis 117 and Bacillus subtilis 6633 bacteria. Organisms that produce this peptide live in oligotrophic environments at very dilute concentrations, suggesting this peptide is not secreted to influence other bacteria. This Prochlorococcus marinus (strain MIT 9313) protein is Lantipeptide prochlorosin 4.3.